The sequence spans 341 residues: Glyceraldehyde-3-phosphate dehydrogenase 3.1 (341 aa).

NAD(+) is bound by residues 13-14 (RI), aspartate 35, and arginine 85. D-glyceraldehyde 3-phosphate contacts are provided by residues 157 to 159 (SCT), threonine 188, 217 to 218 (TG), and arginine 240. The Nucleophile role is filled by cysteine 158. Asparagine 322 is a binding site for NAD(+).

Belongs to the glyceraldehyde-3-phosphate dehydrogenase family. As to quaternary structure, homotetramer.

It localises to the cytoplasm. It carries out the reaction D-glyceraldehyde 3-phosphate + phosphate + NAD(+) = (2R)-3-phospho-glyceroyl phosphate + NADH + H(+). It functions in the pathway carbohydrate degradation; glycolysis; pyruvate from D-glyceraldehyde 3-phosphate: step 1/5. The sequence is that of Glyceraldehyde-3-phosphate dehydrogenase 3.1 from Caenorhabditis briggsae.